The chain runs to 463 residues: Lariat debranching enzyme (463 aa).

4 residues coordinate a divalent metal cation: C8, H10, D33, and N78. Residues 118–148 (SGIYSAMDYKKGRYEGLPYNYKMLKSIYHTR) form a lariat recognition loop region. A divalent metal cation-binding residues include H168, H220, and H222. Residues 250–324 (SGFSMKGLNE…QVTKFLALDK (75 aa)) form a disordered region. The span at 256-267 (GLNEPSQERLPV) shows a compositional bias: polar residues. Composition is skewed to basic and acidic residues over residues 276 to 289 (DEEGSNNEQEEKQD) and 299 to 323 (CRKESCKKEPSLSSSDQVTKFLALD).

Belongs to the lariat debranching enzyme family. Requires Fe(2+) as cofactor. Zn(2+) serves as cofactor. It depends on Mn(2+) as a cofactor.

It is found in the nucleus. The protein localises to the cytoplasm. With respect to regulation, active in presence of diverse metals including Fe(2+), Zn(2+) and Mn(2+). Binds two metal cations in two adjacent alpha and beta metal-binding pockets. In terms of biological role, cleaves the 2'-5' phosphodiester linkage at the branch point of lariat intron pre-mRNAs after splicing and converts them into linear molecules that are subsequently degraded, thereby facilitating ribonucleotide turnover. This is Lariat debranching enzyme (dbr1) from Schizosaccharomyces pombe (strain 972 / ATCC 24843) (Fission yeast).